Reading from the N-terminus, the 115-residue chain is uncharacterized protein (115 aa).

This is an uncharacterized protein from Saccharomyces cerevisiae (strain ATCC 204508 / S288c) (Baker's yeast).